We begin with the raw amino-acid sequence, 458 residues long: NADH-quinone oxidoreductase subunit N (458 aa).

14 consecutive transmembrane segments (helical) span residues leucine 4–isoleucine 24, isoleucine 30–serine 50, glycine 62–isoleucine 82, leucine 94–serine 114, phenylalanine 118–phenylalanine 138, phenylalanine 153–phenylalanine 173, leucine 194–valine 214, phenylalanine 235–isoleucine 255, isoleucine 261–alanine 281, leucine 290–asparagine 310, leucine 318–leucine 338, isoleucine 361–phenylalanine 381, phenylalanine 397–valine 417, and leucine 438–phenylalanine 458.

The protein belongs to the complex I subunit 2 family. NDH-1 is composed of 14 different subunits. Subunits NuoA, H, J, K, L, M, N constitute the membrane sector of the complex.

The protein localises to the cell inner membrane. The catalysed reaction is a quinone + NADH + 5 H(+)(in) = a quinol + NAD(+) + 4 H(+)(out). In terms of biological role, NDH-1 shuttles electrons from NADH, via FMN and iron-sulfur (Fe-S) centers, to quinones in the respiratory chain. The immediate electron acceptor for the enzyme in this species is believed to be ubiquinone. Couples the redox reaction to proton translocation (for every two electrons transferred, four hydrogen ions are translocated across the cytoplasmic membrane), and thus conserves the redox energy in a proton gradient. In Rickettsia felis (strain ATCC VR-1525 / URRWXCal2) (Rickettsia azadi), this protein is NADH-quinone oxidoreductase subunit N.